A 953-amino-acid chain; its full sequence is Serine-aspartate repeat-containing protein C (953 aa).

The signal sequence occupies residues 1-50 (MNNKKTATNRKGMIPNRLNKFSIRKYSVGTASILVGTTLIFGLSGHEAKA). The interval 51–160 (AEHTNGELNQ…AKNVSTTPKT (110 aa)) is disordered. A ligand binding A region region spans residues 51–495 (AEHTNGELNQ…GSSTANGDQK (445 aa)). Over residues 56–71 (GELNQSKNETTAPSEN) the composition is skewed to polar residues. The span at 72–83 (KTTEKVDSRQLK) shows a compositional bias: basic and acidic residues. The span at 84-114 (DNTQTATADQPKVTMSDSATVKETSSNMQSP) shows a compositional bias: polar residues. Low complexity predominate over residues 115–132 (QNATASQSTTQTSNVTTN). Polar residues predominate over residues 133-160 (DKSSTTYSNETDKSNLTQAKNVSTTPKT). 2 CNA-B domains span residues 496–606 (KYNL…YKTP) and 607–717 (KYSL…EEET). The interval 678 to 933 (TQTGTNTTED…NNSNNGTLFG (256 aa)) is disordered. Composition is skewed to acidic residues over residues 685–695 (TEDDKDADGGE) and 712–892 (YYEE…DSDS). The LPXTG sorting signal signature appears at 916–920 (LPETG). Residues 918 to 933 (ETGSENNNSNNGTLFG) show a composition bias toward low complexity. At Thr919 the chain carries Pentaglycyl murein peptidoglycan amidated threonine. Positions 920–953 (GSENNNSNNGTLFGGLFAALGSLLLFGRRKKQNK) are cleaved as a propeptide — removed by sortase.

It belongs to the serine-aspartate repeat-containing protein (SDr) family. Homodimerizes; via N2-Domain. Interacts with host NRXN1; this interaction mediates bacterial attachment to host cells.

It is found in the secreted. The protein localises to the cell wall. Functionally, cell surface-associated calcium-binding protein which plays an important role in adhesion and pathogenesis. Mediates interactions with components of the extracellular matrix such as host NRXN1 to promote bacterial adhesion. This is Serine-aspartate repeat-containing protein C (sdrC) from Staphylococcus aureus (strain Mu50 / ATCC 700699).